A 195-amino-acid chain; its full sequence is MNLIPTVIEQTNRGERAYDIYSRLLKDRIIMLGSGVDDNVANSIVAQMLFLQAEDPEKDISLYINSPGGSITAGMAIYDTMQFIKPDVSTICIGMAASMGAFLLTAGAKGKRMALPNSEVMIHQPLGGMQGQAADMEIHARRIIQMREKLNQIMAERSGQPYERIARDTDRDNFMTAEQAKEYGLIDKVIETPTK.

The Nucleophile role is filled by Ser-98. His-123 is a catalytic residue.

Belongs to the peptidase S14 family. In terms of assembly, fourteen ClpP subunits assemble into 2 heptameric rings which stack back to back to give a disk-like structure with a central cavity, resembling the structure of eukaryotic proteasomes.

It localises to the cytoplasm. It catalyses the reaction Hydrolysis of proteins to small peptides in the presence of ATP and magnesium. alpha-casein is the usual test substrate. In the absence of ATP, only oligopeptides shorter than five residues are hydrolyzed (such as succinyl-Leu-Tyr-|-NHMec, and Leu-Tyr-Leu-|-Tyr-Trp, in which cleavage of the -Tyr-|-Leu- and -Tyr-|-Trp bonds also occurs).. In terms of biological role, cleaves peptides in various proteins in a process that requires ATP hydrolysis. Has a chymotrypsin-like activity. Plays a major role in the degradation of misfolded proteins. ClpXP2 is involved in the complete degradation of the Site-2 clipped anti-sigma-W factor RsiW. This results in the release of SigW and the transcription activation of the genes under the control of the sigma-W factor. This chain is ATP-dependent Clp protease proteolytic subunit 2, found in Shouchella clausii (strain KSM-K16) (Alkalihalobacillus clausii).